A 151-amino-acid chain; its full sequence is UPF0208 membrane protein NT01EI_2692 (151 aa).

The next 2 membrane-spanning stretches (helical) occupy residues 46-65 (FAIR…QIAL) and 69-91 (LGPA…WWLG).

Belongs to the UPF0208 family.

Its subcellular location is the cell inner membrane. This is UPF0208 membrane protein NT01EI_2692 from Edwardsiella ictaluri (strain 93-146).